Reading from the N-terminus, the 1765-residue chain is RANBP2-like and GRIP domain-containing protein 8 (1765 aa).

Residue threonine 19 is modified to Phosphothreonine. The residue at position 21 (serine 21) is a Phosphoserine. TPR repeat units lie at residues 26 to 59 (SMKGFYFAKLYYEAKEYDLAKKYICTYINVQERD), 60 to 93 (PKAHRFLGLLYELEENTEKAVECYRRSVELNPTQ), and 648 to 681 (EDAHITFAILDAVNGNIEDAVTAFESIKSVVSYW). Positions 760–804 (GPLYKNGSLRNADSEIKHSTPSPTKYSLSPSKSYKYSPETPPRWT) are disordered. Residues 778 to 797 (STPSPTKYSLSPSKSYKYSP) are compositionally biased toward low complexity. Positions 1036 to 1172 (HFEPVVQMPE…FEECQRLLLD (137 aa)) constitute a RanBD1 1 domain. Disordered stretches follow at residues 1216–1247 (TEEENKGSGTGVAGASDTTIKPNAENTGPTLE) and 1306–1330 (AKLNQSGTSVGTDEESVVTQEEERD). The span at 1231–1244 (SDTTIKPNAENTGP) shows a compositional bias: polar residues. Acidic residues predominate over residues 1317–1329 (TDEESVVTQEEER). In terms of domain architecture, RanBD1 2 spans 1333-1469 (YFEPVVPLPD…FDEAKTAQEK (137 aa)). Residues 1580–1593 (NNSETSSVAQSGSE) are compositionally biased toward polar residues. Disordered regions lie at residues 1580–1621 (NNSE…KNLS) and 1746–1765 (KGKLAAVAQDEEENPSRSSG). Positions 1594-1617 (SKVEPKKCELSKNSDIEQSSDSKV) are enriched in basic and acidic residues. One can recognise a GRIP domain in the interval 1702 to 1752 (REKSAANLEYLKNVLLQFIFLKPGSERERLLPVINTMLQLSPEEKGKLAAV).

In terms of assembly, interacts with GTP-bound ARL1.

This chain is RANBP2-like and GRIP domain-containing protein 8 (RGPD8), found in Homo sapiens (Human).